Reading from the N-terminus, the 235-residue chain is Protein Thf1 (235 aa).

Residues 179–228 (LNLSSDKLQKDLDLYRSNVDKMGQLLAVIEDALEAERKKREKAKQEVATT) are a coiled coil.

This sequence belongs to the THF1 family.

Its function is as follows. May be involved in photosynthetic membrane biogenesis. The protein is Protein Thf1 of Rippkaea orientalis (strain PCC 8801 / RF-1) (Cyanothece sp. (strain PCC 8801)).